Reading from the N-terminus, the 51-residue chain is Large ribosomal subunit protein eL39 (51 aa).

The protein belongs to the eukaryotic ribosomal protein eL39 family.

This is Large ribosomal subunit protein eL39 from Methanococcus aeolicus (strain ATCC BAA-1280 / DSM 17508 / OCM 812 / Nankai-3).